The chain runs to 556 residues: Arginine--tRNA ligase 2 (556 aa).

The 'HIGH' region motif lies at 132–142; sequence ANPTGDLHLGH.

Belongs to the class-I aminoacyl-tRNA synthetase family. Monomer.

The protein resides in the cytoplasm. The enzyme catalyses tRNA(Arg) + L-arginine + ATP = L-arginyl-tRNA(Arg) + AMP + diphosphate. The sequence is that of Arginine--tRNA ligase 2 from Bacillus thuringiensis subsp. konkukian (strain 97-27).